The sequence spans 476 residues: Zinc transporter SLC39A7 (476 aa).

A helical membrane pass occupies residues 7 to 27 (APHWVAVGLLTWAALGLLVAG). A compositionally biased stretch (basic and acidic residues) spans 35 to 109 (HKDVEEDFHG…SHGHSHDSLH (75 aa)). The disordered stretch occupies residues 35 to 131 (HKDVEEDFHG…HGTSREAGAP (97 aa)). Histidine 73 is modified (pros-methylhistidine). Over residues 110–120 (HGGHGHAHREH) the composition is skewed to basic residues. A run of 3 helical transmembrane segments spans residues 146-166 (ALGA…LIPV), 177-197 (LQIL…LHLI), and 222-242 (GPIL…LVVE). A disordered region spans residues 249-320 (KGGHGHSHGH…QSPEEEKAGS (72 aa)). Residues 257 to 292 (GHGDRHAHGDSHTHGDRHECSSKEKPSTEEEKEVGG) are compositionally biased toward basic and acidic residues. A Phosphoserine modification is found at serine 283. 2 consecutive transmembrane segments (helical) span residues 393–413 (VTAI…GGAV) and 417–437 (VAGG…FIYV).

It belongs to the ZIP transporter (TC 2.A.5) family. KE4/Catsup subfamily. As to quaternary structure, homodimer. Post-translationally, methylation at some His residue by METTL9 leads to reduced zinc-binding. In terms of processing, rapidly phosphorylated by CK2 following Zn(2+) treatment. This phosphorylation is required for efficient cytosolic Zn(2+) release. In terms of tissue distribution, widely expressed. Highly expressed in the intestinal crypts.

Its subcellular location is the endoplasmic reticulum membrane. It localises to the golgi apparatus. The protein resides in the cis-Golgi network membrane. The catalysed reaction is Zn(2+)(in) = Zn(2+)(out). In terms of biological role, transports Zn(2+) from the endoplasmic reticulum (ER)/Golgi apparatus to the cytosol, playing an essential role in the regulation of cytosolic zinc levels. Acts as a gatekeeper of zinc release from intracellular stores, requiring post-translational activation by phosphorylation, resulting in activation of multiple downstream pathways leading to cell growth and proliferation. Has an essential role in B cell development and is required for proper B cell receptor signaling. Plays an important role in maintaining intestinal epithelial homeostasis and skin dermis development by regulating ER function. Controls cell signaling pathways involved in glucose metabolism in skeletal muscle. Has a protective role against ER stress in different biological contexts. Mediates Zn(2+)-induced ferroptosis. This Mus musculus (Mouse) protein is Zinc transporter SLC39A7 (Slc39a7).